Here is an 89-residue protein sequence, read N- to C-terminus: Long neurotoxin homolog Pa ID (89 aa).

Residues 1-21 form the signal peptide; sequence MKTLLLTLVVVTIMCLDLGYT. 5 disulfide bridges follow: Cys-24/Cys-42, Cys-35/Cys-63, Cys-48/Cys-52, Cys-67/Cys-78, and Cys-79/Cys-84.

It belongs to the three-finger toxin family. Long-chain subfamily. Type II alpha-neurotoxin sub-subfamily. Expressed by the venom gland.

The protein localises to the secreted. Functionally, binds with high affinity to muscular (alpha-1/CHRNA1) and neuronal (alpha-7/CHRNA7) nicotinic acetylcholine receptor (nAChR) and inhibits acetylcholine from binding to the receptor, thereby impairing neuromuscular and neuronal transmission. The polypeptide is Long neurotoxin homolog Pa ID (Pseudechis australis (Mulga snake)).